We begin with the raw amino-acid sequence, 271 residues long: Sulfur carrier protein adenylyltransferase (271 aa).

Residues Arg13, Gly40, Glu61, Arg72, Lys85, Leu109, and 129–133 (DNFPT) contribute to the ATP site. Cys175 and Cys178 together coordinate Zn(2+). A Glycyl cysteine thioester (Cys-Gly) (interchain with G-Cter in TtuB) cross-link involves residue Cys192. The Zn(2+) site is built by Cys249 and Cys252.

This sequence belongs to the HesA/MoeB/ThiF family. The cofactor is Zn(2+). In terms of processing, conjugated to TtuB via a covalent linkage that likely involves a lysine residue. Is able to form a covalent thioester adduct with TtuB via Cys-192 in vitro.

It carries out the reaction [molybdopterin-synthase sulfur-carrier protein]-C-terminal Gly-Gly + ATP + H(+) = [molybdopterin-synthase sulfur-carrier protein]-C-terminal Gly-Gly-AMP + diphosphate. The catalysed reaction is [ThiS sulfur-carrier protein]-C-terminal Gly-Gly + ATP + H(+) = [ThiS sulfur-carrier protein]-C-terminal Gly-Gly-AMP + diphosphate. The enzyme catalyses [TtuB sulfur-carrier protein]-C-terminal Gly-Gly + ATP + H(+) = [TtuB sulfur-carrier protein]-C-terminal Gly-Gly-AMP + diphosphate. It participates in tRNA modification. The protein operates within cofactor biosynthesis; thiamine diphosphate biosynthesis. It functions in the pathway cofactor biosynthesis; molybdopterin biosynthesis. Enzymatic activity may be regulated by TtuB conjugation. In terms of biological role, adenylyltransferase involved in the biosynthesis of several sulfur compounds. Is required for the 2-thiolation of 5-methyluridine residue at position 54 in the T loop of tRNAs, leading to 5-methyl-2-thiouridine (m(5)s(2)U or s(2)T). This modification allows thermal stabilization of tRNAs in thermophilic microorganisms, and is essential for cell growth at high temperatures. TtuC catalyzes the adenylation by ATP of the carboxyl group of the C-terminal glycine of sulfur carrier protein TtuB. Is also involved in the biosynthesis of thiamine, molybdenum cofactor (Moco) and probably tungsten cofactor (Wco), by adenylating the sulfur carriers ThiS and MoaD. Is required for the conjugation of TtuB to target proteins. This chain is Sulfur carrier protein adenylyltransferase, found in Thermus thermophilus (strain ATCC BAA-163 / DSM 7039 / HB27).